Here is a 392-residue protein sequence, read N- to C-terminus: Telomere-binding protein subunit beta (392 aa).

Residues 234 to 392 (QQVESVQVQP…ASKASKRSKK (159 aa)) form a disordered region. Basic residues predominate over residues 247–256 (GGAKGKKKAA). Low complexity predominate over residues 257-268 (TKSATKKTVAAK). The span at 269–284 (KTAESADVRKSVDKIV) shows a compositional bias: basic and acidic residues. Residues 328–343 (SPSGKKSTKTTDQMTM) are compositionally biased toward polar residues. The segment covering 374 to 384 (GKASATSGKAS) has biased composition (low complexity).

In terms of assembly, heterodimer of an alpha and a beta subunit.

The protein localises to the nucleus. The protein resides in the chromosome. It localises to the telomere. May function as protective capping of the single-stranded telomeric overhang. May also participate in telomere length regulation during DNA replication. The sequence is that of Telomere-binding protein subunit beta (STY43) from Stylonychia mytilus (Ciliate).